The primary structure comprises 105 residues: UPF0235 protein A1C_06510 (105 aa).

The protein belongs to the UPF0235 family.

This Rickettsia akari (strain Hartford) protein is UPF0235 protein A1C_06510.